Consider the following 222-residue polypeptide: Uracil-DNA glycosylase (222 aa).

Aspartate 66 serves as the catalytic Proton acceptor.

The protein belongs to the uracil-DNA glycosylase (UDG) superfamily. UNG family.

The protein resides in the cytoplasm. The catalysed reaction is Hydrolyzes single-stranded DNA or mismatched double-stranded DNA and polynucleotides, releasing free uracil.. In terms of biological role, excises uracil residues from the DNA which can arise as a result of misincorporation of dUMP residues by DNA polymerase or due to deamination of cytosine. The chain is Uracil-DNA glycosylase from Porphyromonas gingivalis (strain ATCC BAA-308 / W83).